A 1621-amino-acid polypeptide reads, in one-letter code: Nestin (1621 aa).

At M1 the chain carries N-acetylmethionine. Residues 1 to 7 (MEGCMGE) are head. The segment at 8-43 (ESFQMWELNRRLEAYLARVKALEEQNELLSAELGGL) is coil 1A. An IF rod domain is found at 8–313 (ESFQMWELNR…TLLEAENSRL (306 aa)). The interval 44-55 (RAQSADTSWRAH) is linker 1. A coil 1B region spans residues 56 to 151 (ADDELAALRA…VAHEEERVGL (96 aa)). The tract at residues 152-173 (NAQAACAPRCPAPPRGPPAPAP) is linker 12. Positions 174–192 (EVEELARRLGEAWRGAVRG) are coil 2A. The interval 193–195 (YQE) is linker 2. The coil 2B stretch occupies residues 196-313 (RVAHMETSLG…TLLEAENSRL (118 aa)). The residue at position 311 (S311) is a Phosphoserine. The tract at residues 314–1621 (QTPGGGSKTS…DRESWSSGED (1308 aa)) is tail. Residue T315 is modified to Phosphothreonine. S325 is subject to Phosphoserine. A Phosphothreonine modification is found at T338. 2 positions are modified to phosphoserine: S355 and S358. At T388 the chain carries Phosphothreonine. 12 positions are modified to phosphoserine: S398, S471, S476, S548, S564, S578, S588, S638, S680, S702, S746, and S768. The tract at residues 439–490 (SVLPGPEEPGGQRQEASTGQSPEDHASLAPPLSPDHSSLEAKDGESGGSRVF) is disordered. Positions 670 to 788 (LEKENQEPLR…PPEKVDLEPL (119 aa)) are disordered. Composition is skewed to basic and acidic residues over residues 687–725 (EALR…LKTL), 736–770 (LETE…RSLG), and 779–788 (PPEKVDLEPL). Phosphoserine is present on S790. K811 is covalently cross-linked (Glycyl lysine isopeptide (Lys-Gly) (interchain with G-Cter in SUMO1); alternate). A Glycyl lysine isopeptide (Lys-Gly) (interchain with G-Cter in SUMO2); alternate cross-link involves residue K811. 3 positions are modified to phosphoserine: S820, S831, and S842. Residue T851 is modified to Phosphothreonine. S894, S905, S913, and S934 each carry phosphoserine. The tract at residues 895 to 1593 (LGAWNLENLR…GSALKTSWAG (699 aa)) is disordered. Basic and acidic residues-rich tracts occupy residues 904–936 (RSPE…RSLE), 949–960 (QRWEDTVEKDQE), 980–994 (LNLR…KEEV), and 1012–1024 (GHPE…EQRG). A Phosphoserine modification is found at S1016. A compositionally biased stretch (low complexity) spans 1085-1098 (GSEPAMGESAAGAE). The segment covering 1099 to 1110 (PGPGQGVGGLGD) has biased composition (gly residues). Basic and acidic residues-rich tracts occupy residues 1129–1145 (LEAK…KDLE) and 1159–1184 (GKSR…RGAE). 8 positions are modified to phosphoserine: S1261, S1282, S1286, S1310, S1347, S1409, S1418, and S1452. Positions 1275 to 1292 (PQEEGEESREESEEDELG) are enriched in acidic residues. A compositionally biased stretch (acidic residues) spans 1409–1428 (SDGFADEEESGEEGEEDQEE). Low complexity-rich tracts occupy residues 1440–1453 (GSSV…SSSQ) and 1460–1470 (SDSVSVSVPWD). Residues 1486–1495 (ETESQDSAEP) show a composition bias toward polar residues. Phosphoserine occurs at positions 1496, 1498, 1577, 1617, and 1618.

It belongs to the intermediate filament family. Forms homodimers and homotetramers in vitro. In mixtures with other intermediate filament proteins such as vimentin and alpha-internexin, tis protein preferentially forms heterodimers which can assemble to form intermediate filaments if nestin does not exceed 25%. Interacts with FHOD3. In terms of processing, constitutively phosphorylated. This increases during mitosis when the cytoplasmic intermediate filament network is reorganized. As to expression, CNS stem cells.

In terms of biological role, required for brain and eye development. Promotes the disassembly of phosphorylated vimentin intermediate filaments (IF) during mitosis and may play a role in the trafficking and distribution of IF proteins and other cellular factors to daughter cells during progenitor cell division. Required for survival, renewal and mitogen-stimulated proliferation of neural progenitor cells. In Homo sapiens (Human), this protein is Nestin (NES).